The chain runs to 251 residues: Intermembrane phospholipid transport system lipoprotein MlaA (251 aa).

The signal sequence occupies residues 1-17; that stretch reads MKLRLSALALGTTLLVG. Residue C18 is the site of N-palmitoyl cysteine attachment. C18 carries the S-diacylglycerol cysteine lipid modification. Positions 228 to 251 are disordered; it reads GELKPQENPNAQAIQDDLKDIDSE.

Belongs to the MlaA family.

It localises to the cell outer membrane. Its function is as follows. Involved in a phospholipid transport pathway that maintains lipid asymmetry in the outer membrane by retrograde trafficking of phospholipids from the outer membrane to the inner membrane. Required for intercellular spreading of S.flexneri. This Shigella flexneri protein is Intermembrane phospholipid transport system lipoprotein MlaA.